The chain runs to 532 residues: Alkaline phosphatase (532 aa).

The disordered stretch occupies residues 1 to 20 (MASERDPLLPVHGEGPESPS). The chain crosses the membrane as a helical; Signal-anchor for type II membrane protein span at residues 27-47 (WIKHGILLILVLSTVIFFYFF). Asp-68 serves as a coordination point for Mg(2+). Asp-68 contributes to the Zn(2+) binding site. Ser-115 acts as the Phosphoserine intermediate in catalysis. 3 residues coordinate Mg(2+): Asp-166, Thr-168, and Glu-306. Zn(2+)-binding residues include Asp-311, His-315, Asp-352, His-353, and His-456.

It belongs to the alkaline phosphatase family. Requires Mg(2+) as cofactor. Zn(2+) serves as cofactor.

It localises to the membrane. It carries out the reaction a phosphate monoester + H2O = an alcohol + phosphate. In Schizosaccharomyces pombe (strain 972 / ATCC 24843) (Fission yeast), this protein is Alkaline phosphatase.